The primary structure comprises 433 residues: Casein kinase 1-like protein 5 (433 aa).

In terms of domain architecture, Protein kinase spans 9 to 278; it reads FRLGRKIGSG…LKRLFRNLFI (270 aa). ATP contacts are provided by residues 15–23 and Lys-38; that span reads IGSGSFGEI. Residue Asp-128 is the Proton acceptor of the active site. The tract at residues 297–433 is disordered; sequence QSQSGNPQPR…DDVEPQSKAL (137 aa). A compositionally biased stretch (basic and acidic residues) spans 342 to 359; it reads LKQKDKNGNDSAIAKDKL. A compositionally biased stretch (low complexity) spans 362-375; that stretch reads GSLNLGRSEGSSSR. Ser-390 carries the post-translational modification Phosphoserine. The span at 407–423 shows a compositional bias: polar residues; it reads INNNAGDETAATPQSNG.

This sequence belongs to the protein kinase superfamily. CK1 Ser/Thr protein kinase family. Casein kinase I subfamily. Monomer. Autophosphorylated.

Its subcellular location is the cytoplasm. The enzyme catalyses L-seryl-[protein] + ATP = O-phospho-L-seryl-[protein] + ADP + H(+). The catalysed reaction is L-threonyl-[protein] + ATP = O-phospho-L-threonyl-[protein] + ADP + H(+). In terms of biological role, casein kinases are operationally defined by their preferential utilization of acidic proteins such as caseins as substrates. It can phosphorylate a large number of proteins. The sequence is that of Casein kinase 1-like protein 5 from Arabidopsis thaliana (Mouse-ear cress).